The primary structure comprises 1871 residues: Protein RRP5 homolog (1871 aa).

Positions 1–62 (MANLEESFPR…KTKKLKIEKR (62 aa)) are disordered. Ala2 bears the N-acetylalanine mark. Ser7 is subject to Phosphoserine. The span at 43 to 59 (KRKKSQKGPAKTKKLKI) shows a compositional bias: basic residues. S1 motif domains follow at residues 83 to 171 (GMRI…LSLN), 187 to 258 (GMLL…LSVG), 281 to 346 (GLVV…LSLR), and 365 to 436 (GAVL…LSLR). At Ser438 the chain carries Phosphoserine. S1 motif domains are found at residues 453 to 522 (GAVV…MTLK), 542 to 611 (GLQT…LSFK), 636 to 707 (GQLV…LCRK), and 729 to 798 (GMLL…LSLR). Positions 998–1018 (AAKRTMRPTQKDSETVDEDEE) are disordered. Residue Lys1030 forms a Glycyl lysine isopeptide (Lys-Gly) (interchain with G-Cter in SUMO1) linkage. S1 motif domains follow at residues 1036–1109 (GDMV…ISHP), 1149–1222 (GQTV…LSLT), 1230–1298 (GEVA…LSLR), and 1324–1396 (GQLL…LSFL). A phosphoserine mark is found at Ser1360 and Ser1362. Disordered regions lie at residues 1395-1531 (FLPG…APRL) and 1549-1586 (ALPP…KAEK). Residue Lys1416 forms a Glycyl lysine isopeptide (Lys-Gly) (interchain with G-Cter in SUMO2) linkage. Basic and acidic residues-rich tracts occupy residues 1416–1459 (KQEE…EKQQ) and 1469–1484 (GGRE…ERVS). Ser1476, Ser1493, and Ser1498 each carry phosphoserine. Over residues 1575 to 1586 (KERELEKQKAEK) the composition is skewed to basic and acidic residues. HAT repeat units follow at residues 1599-1631 (GRQP…FHLQ), 1705-1737 (EKFQ…FLLR), 1775-1807 (GDAE…MTIK), and 1809-1844 (GSQK…YEKQ).

Interacts with NF-kappa-B p50/NFKB1 and NF-kappa-B p65/RELA.

It localises to the nucleus. Its subcellular location is the nucleolus. Essential for the generation of mature 18S rRNA, specifically necessary for cleavages at sites A0, 1 and 2 of the 47S precursor. Directly interacts with U3 snoRNA. Its function is as follows. Involved in the biogenesis of rRNA. This is Protein RRP5 homolog (PDCD11) from Homo sapiens (Human).